The sequence spans 45 residues: Photosystem II reaction center protein K (45 aa).

Positions 1–8 are excised as a propeptide; it reads MEGILFLA. The chain crosses the membrane as a helical span at residues 24–44; that stretch reads APVIPVFFLLLAFVWQAAVGF.

It belongs to the PsbK family. PSII is composed of 1 copy each of membrane proteins PsbA, PsbB, PsbC, PsbD, PsbE, PsbF, PsbH, PsbI, PsbJ, PsbK, PsbL, PsbM, PsbT, PsbX, PsbY, PsbZ, Psb30/Ycf12, at least 3 peripheral proteins of the oxygen-evolving complex and a large number of cofactors. It forms dimeric complexes.

Its subcellular location is the plastid. The protein localises to the chloroplast thylakoid membrane. One of the components of the core complex of photosystem II (PSII). PSII is a light-driven water:plastoquinone oxidoreductase that uses light energy to abstract electrons from H(2)O, generating O(2) and a proton gradient subsequently used for ATP formation. It consists of a core antenna complex that captures photons, and an electron transfer chain that converts photonic excitation into a charge separation. This chain is Photosystem II reaction center protein K, found in Guillardia theta (Cryptophyte).